The primary structure comprises 67 residues: UPF0337 protein SP_1805 (67 aa).

The interval 1-30 (MSVEEKLNQAKGSIKEGVGKAIGDEKMEKE) is disordered.

This sequence belongs to the UPF0337 (CsbD) family.

This Streptococcus pneumoniae serotype 4 (strain ATCC BAA-334 / TIGR4) protein is UPF0337 protein SP_1805.